The sequence spans 510 residues: Arginine biosynthesis bifunctional protein ArgJ, mitochondrial (510 aa).

A compositionally biased stretch (polar residues) spans 57–70 (TSTNEPSAATTNVP). Positions 57–76 (TSTNEPSAATTNVPHPQEAP) are disordered. Thr-222, Lys-248, Thr-267, and Glu-364 together coordinate substrate. The Nucleophile role is filled by Thr-267.

Belongs to the ArgJ family. In terms of assembly, heterodimer of an alpha and a beta chain. In terms of processing, the alpha and beta chains are autoproteolytically processed from a single precursor protein within the mitochondrion.

Its subcellular location is the mitochondrion matrix. It carries out the reaction N(2)-acetyl-L-ornithine + L-glutamate = N-acetyl-L-glutamate + L-ornithine. The catalysed reaction is L-glutamate + acetyl-CoA = N-acetyl-L-glutamate + CoA + H(+). Its pathway is amino-acid biosynthesis; L-arginine biosynthesis; L-ornithine and N-acetyl-L-glutamate from L-glutamate and N(2)-acetyl-L-ornithine (cyclic): step 1/1. It participates in amino-acid biosynthesis; L-arginine biosynthesis; N(2)-acetyl-L-ornithine from L-glutamate: step 1/4. In terms of biological role, catalyzes two activities which are involved in the cyclic version of arginine biosynthesis: the synthesis of acetylglutamate from glutamate and acetyl-CoA, and of ornithine by transacetylation between acetylornithine and glutamate. This Malassezia globosa (strain ATCC MYA-4612 / CBS 7966) (Dandruff-associated fungus) protein is Arginine biosynthesis bifunctional protein ArgJ, mitochondrial.